Consider the following 859-residue polypeptide: Leucine--tRNA ligase (859 aa).

A 'HIGH' region motif is present at residues 42-52; it reads PYPSGRLHMGH. A 'KMSKS' region motif is present at residues 618 to 622; sequence KMSKS. Lys621 is an ATP binding site.

This sequence belongs to the class-I aminoacyl-tRNA synthetase family.

The protein localises to the cytoplasm. The enzyme catalyses tRNA(Leu) + L-leucine + ATP = L-leucyl-tRNA(Leu) + AMP + diphosphate. The sequence is that of Leucine--tRNA ligase from Shewanella baltica (strain OS195).